Here is a 283-residue protein sequence, read N- to C-terminus: Protease HtpX (283 aa).

The next 2 helical transmembrane spans lie at 4 to 24 and 33 to 53; these read ILLF…ILSV and GGIL…SLFL. Histidine 139 contacts Zn(2+). Glutamate 140 is a catalytic residue. Histidine 143 serves as a coordination point for Zn(2+). 2 helical membrane-spanning segments follow: residues 147–167 and 190–210; these read GDMV…IFLS and IYFL…SIIA. Glutamate 218 lines the Zn(2+) pocket.

The protein belongs to the peptidase M48B family. It depends on Zn(2+) as a cofactor.

It localises to the cell inner membrane. This is Protease HtpX from Haemophilus influenzae (strain PittEE).